A 511-amino-acid chain; its full sequence is Intermediate cleaving peptidase 55 (511 aa).

5 residues coordinate Mn(2+): D327, D338, H417, E444, and E467.

This sequence belongs to the peptidase M24B family. It depends on Mn(2+) as a cofactor.

The protein localises to the nucleus. Its subcellular location is the mitochondrion inner membrane. The catalysed reaction is The enzyme cleaves the 36-Pro-Pro-37 bond of cysteine desulfurase (EC 2.8.1.7) removing three amino acid residues (Tyr-Ser-Pro) from the N-terminus after cleavage by mitochondrial processing peptidase.. Functionally, aminopeptidase which cleaves preprotein intermediates that carry destabilizing N-ter amino acid residues after the mitochondrial processing peptidase (MPP) cleavage site and is thus critical for stabilization of the mitochondrial proteome. This is Intermediate cleaving peptidase 55 (ICP55) from Saccharomyces cerevisiae (strain ATCC 204508 / S288c) (Baker's yeast).